The sequence spans 340 residues: Photosystem II protein D1 (340 aa).

3 helical membrane-spanning segments follow: residues Y25–V42, H114–F129, and W138–A152. Chlorophyll a is bound at residue H114. W122 contacts pheophytin a. [CaMn4O5] cluster-binding residues include D166 and E185. Residues F193–L214 traverse the membrane as a helical segment. H194 contributes to the chlorophyll a binding site. A quinone contacts are provided by residues H211 and S260–F261. Position 211 (H211) interacts with Fe cation. H268 lines the Fe cation pocket. Residues F270–L284 form a helical membrane-spanning segment. [CaMn4O5] cluster is bound by residues H328, E329, D338, and A340.

The protein belongs to the reaction center PufL/M/PsbA/D family. PSII is composed of 1 copy each of membrane proteins PsbA, PsbB, PsbC, PsbD, PsbE, PsbF, PsbH, PsbI, PsbJ, PsbK, PsbL, PsbM, PsbT, PsbX, PsbY, PsbZ, Psb30/Ycf12, at least 3 peripheral proteins of the oxygen-evolving complex and a large number of cofactors. It forms dimeric complexes. The D1/D2 heterodimer binds P680, chlorophylls that are the primary electron donor of PSII, and subsequent electron acceptors. It shares a non-heme iron and each subunit binds pheophytin, quinone, additional chlorophylls, carotenoids and lipids. D1 provides most of the ligands for the Mn4-Ca-O5 cluster of the oxygen-evolving complex (OEC). There is also a Cl(-1) ion associated with D1 and D2, which is required for oxygen evolution. The PSII complex binds additional chlorophylls, carotenoids and specific lipids. is required as a cofactor. Tyr-157 forms a radical intermediate that is referred to as redox-active TyrZ, YZ or Y-Z.

The protein localises to the plastid. Its subcellular location is the chloroplast thylakoid membrane. It carries out the reaction 2 a plastoquinone + 4 hnu + 2 H2O = 2 a plastoquinol + O2. Its function is as follows. Photosystem II (PSII) is a light-driven water:plastoquinone oxidoreductase that uses light energy to abstract electrons from H(2)O, generating O(2) and a proton gradient subsequently used for ATP formation. It consists of a core antenna complex that captures photons, and an electron transfer chain that converts photonic excitation into a charge separation. The D1/D2 (PsbA/PsbD) reaction center heterodimer binds P680, the primary electron donor of PSII as well as several subsequent electron acceptors. The sequence is that of Photosystem II protein D1 from Amphidinium carterae (Dinoflagellate).